The primary structure comprises 752 residues: Granule-bound starch synthase 2, chloroplastic/amyloplastic (752 aa).

A chloroplast-targeting transit peptide spans 1–57 (MMLSLGSDATVLPFHAKNLKFTPKLSTLNGDLAFSKGLGVGRLNCGSVRLNHKQHVR). 2 disordered regions span residues 116 to 146 (LEGN…SGSA) and 224 to 253 (FENF…EKPP). Lys275 is a binding site for ADP-alpha-D-glucose.

The protein belongs to the glycosyltransferase 1 family. Bacterial/plant glycogen synthase subfamily. In terms of tissue distribution, widely expressed.

It is found in the plastid. The protein localises to the chloroplast. The protein resides in the amyloplast. The enzyme catalyses [(1-&gt;4)-alpha-D-glucosyl](n) + ADP-alpha-D-glucose = [(1-&gt;4)-alpha-D-glucosyl](n+1) + ADP + H(+). Its pathway is glycan biosynthesis; starch biosynthesis. The sequence is that of Granule-bound starch synthase 2, chloroplastic/amyloplastic from Pisum sativum (Garden pea).